Reading from the N-terminus, the 465-residue chain is Argininosuccinate lyase (465 aa).

This sequence belongs to the lyase 1 family. Argininosuccinate lyase subfamily.

The protein localises to the cytoplasm. The catalysed reaction is 2-(N(omega)-L-arginino)succinate = fumarate + L-arginine. Its pathway is amino-acid biosynthesis; L-arginine biosynthesis; L-arginine from L-ornithine and carbamoyl phosphate: step 3/3. This Rhodopseudomonas palustris (strain HaA2) protein is Argininosuccinate lyase.